A 91-amino-acid polypeptide reads, in one-letter code: PqqA binding protein (91 aa).

It belongs to the PqqD family. As to quaternary structure, monomer. Interacts with PqqE.

The protein operates within cofactor biosynthesis; pyrroloquinoline quinone biosynthesis. Functions as a PqqA binding protein and presents PqqA to PqqE, in the pyrroloquinoline quinone (PQQ) biosynthetic pathway. The polypeptide is PqqA binding protein (Pseudomonas entomophila (strain L48)).